The chain runs to 359 residues: Type-1 angiotensin II receptor (359 aa).

Over 1–25 (MVPNYSTEETVKRIHVDCPVSGRHS) the chain is Extracellular. N4 carries an N-linked (GlcNAc...) asparagine glycan. D17 is an angiotensin II binding site. Intrachain disulfides connect C18/C274 and C101/C180. A helical membrane pass occupies residues 26–55 (YIYIMVPTVYSIIFIIGIFGNSLVVIVIYC). Topologically, residues 56–61 (YMKLKT) are cytoplasmic. Residues 62-89 (VASIFLLNLALADLCFLITLPLWAAYTA) form a helical membrane-spanning segment. Over 90–98 (MEYQWPFGN) the chain is Extracellular. Residues 99–125 (CLCKLASAGISFNLYASVFLLTCLSID) form a helical membrane-spanning segment. Topologically, residues 126–141 (RYLAIVHPVKSRIRRT) are cytoplasmic. Residues 142 to 165 (MFVARVTCIVIWLLAGVASLPVII) form a helical membrane-spanning segment. The Extracellular portion of the chain corresponds to 166–190 (HRNIFFAENLNMTVCGFRYDNNNTT). Residue R167 participates in angiotensin II binding. N-linked (GlcNAc...) asparagine glycosylation is present at N176. 2 residues coordinate angiotensin II: F182 and Y184. N-linked (GlcNAc...) asparagine glycosylation is found at N187 and N188. Residues 191-216 (LRVGLGLSKNLLGFLIPFLIILTSYT) traverse the membrane as a helical segment. K199 is a binding site for angiotensin II. Residues 217–239 (LIWKTLKKAYQIQRNKTRNDDIF) are Cytoplasmic-facing. Residues 240–268 (KMIVAIVFFFFFSWIPHQVFTFLDVLIQL) form a helical membrane-spanning segment. Topologically, residues 269 to 278 (HVITDCKITD) are extracellular. Residues 279 to 304 (IVDTAMPFTICIAYFNNCLNPFFYVF) traverse the membrane as a helical segment. The Cytoplasmic portion of the chain corresponds to 305 to 359 (FGKNFKKYFLQLIKYIPPNVSTHPSLTTKMSSLSYRPPENIRLPTKKTAGSFDAE).

This sequence belongs to the G-protein coupled receptor 1 family. In terms of processing, C-terminal Ser or Thr residues may be phosphorylated.

The protein resides in the cell membrane. Its function is as follows. Receptor for angiotensin II, a vasoconstricting peptide, which acts as a key regulator of blood pressure and sodium retention by the kidney. The activated receptor in turn couples to G-alpha proteins G(q) (GNAQ, GNA11, GNA14 or GNA15) and thus activates phospholipase C and increases the cytosolic Ca(2+) concentrations, which in turn triggers cellular responses such as stimulation of protein kinase C. In Gallus gallus (Chicken), this protein is Type-1 angiotensin II receptor (AGTR1).